The primary structure comprises 194 residues: Phosphoheptose isomerase (194 aa).

In terms of domain architecture, SIS spans 37 to 194 (ISNSFKQGGK…LIEFEMAKQA (158 aa)). Position 52-54 (52-54 (NGG)) interacts with substrate. Zn(2+) is bound by residues histidine 61 and glutamate 65. Substrate is bound by residues glutamate 65, 93 to 94 (ND), 119 to 121 (STS), serine 124, and glutamine 172. Residues glutamine 172 and histidine 180 each coordinate Zn(2+).

It belongs to the SIS family. GmhA subfamily. In terms of assembly, homotetramer. The cofactor is Zn(2+).

It is found in the cytoplasm. The catalysed reaction is 2 D-sedoheptulose 7-phosphate = D-glycero-alpha-D-manno-heptose 7-phosphate + D-glycero-beta-D-manno-heptose 7-phosphate. It participates in carbohydrate biosynthesis; D-glycero-D-manno-heptose 7-phosphate biosynthesis; D-glycero-alpha-D-manno-heptose 7-phosphate and D-glycero-beta-D-manno-heptose 7-phosphate from sedoheptulose 7-phosphate: step 1/1. The protein operates within bacterial outer membrane biogenesis; LOS core biosynthesis. Catalyzes the isomerization of sedoheptulose 7-phosphate in D-glycero-D-manno-heptose 7-phosphate. The sequence is that of Phosphoheptose isomerase from Haemophilus influenzae (strain ATCC 51907 / DSM 11121 / KW20 / Rd).